A 162-amino-acid polypeptide reads, in one-letter code: uncharacterized protein (162 aa).

Its subcellular location is the cytoplasm. The protein resides in the nucleus. This is an uncharacterized protein from Schizosaccharomyces pombe (strain 972 / ATCC 24843) (Fission yeast).